The chain runs to 403 residues: S-adenosylmethionine synthase (403 aa).

Position 17 (His17) interacts with ATP. Position 19 (Asp19) interacts with Mg(2+). K(+) is bound at residue Glu45. 2 residues coordinate L-methionine: Glu58 and Gln104. A flexible loop region spans residues 104–114 (QSSDIAQGVNT). ATP contacts are provided by residues 179–181 (DGK), 250–251 (KF), Asp259, 265–266 (RK), Ala282, and Lys286. L-methionine is bound at residue Asp259. L-methionine is bound at residue Lys290.

The protein belongs to the AdoMet synthase family. In terms of assembly, homotetramer; dimer of dimers. Mg(2+) serves as cofactor. Requires K(+) as cofactor.

It localises to the cytoplasm. It catalyses the reaction L-methionine + ATP + H2O = S-adenosyl-L-methionine + phosphate + diphosphate. It participates in amino-acid biosynthesis; S-adenosyl-L-methionine biosynthesis; S-adenosyl-L-methionine from L-methionine: step 1/1. Catalyzes the formation of S-adenosylmethionine (AdoMet) from methionine and ATP. The overall synthetic reaction is composed of two sequential steps, AdoMet formation and the subsequent tripolyphosphate hydrolysis which occurs prior to release of AdoMet from the enzyme. The protein is S-adenosylmethionine synthase of Mycobacterium leprae (strain Br4923).